Consider the following 532-residue polypeptide: Muscarinic acetylcholine receptor M5 (532 aa).

The Extracellular portion of the chain corresponds to 1-29 (MEGDSYHNATTVNGTPVNHQPLERHRLWE). An N-linked (GlcNAc...) asparagine glycan is attached at asparagine 8. A helical membrane pass occupies residues 30-53 (VITIAAVTAVVSLITIVGNVLVMI). The Cytoplasmic portion of the chain corresponds to 54 to 66 (SFKVNSQLKTVNN). The helical transmembrane segment at 67 to 87 (YYLLSLACADLIIGIFSMNLY) threads the bilayer. Residues 88–104 (TTYILMGRWALGSLACD) lie on the Extracellular side of the membrane. The cysteines at positions 103 and 183 are disulfide-linked. A helical membrane pass occupies residues 105-126 (LWLALDYVASNASVMNLLVISF). The Cytoplasmic segment spans residues 127–146 (DRYFSITRPLTYRAKRTPKR). A helical membrane pass occupies residues 147-169 (AGIMIGLAWLISFILWAPAILCW). At 170–191 (QYLVGKRTVPLDECQIQFLSEP) the chain is on the extracellular side. Residues 192 to 214 (TITFGTAIAAFYIPVSVMTILYC) form a helical membrane-spanning segment. Residues 215-443 (RIYRETEKRT…LVKERKAAQT (229 aa)) are Cytoplasmic-facing. The interval 262–294 (AQRERNQASWSSSRRSTSTTGKPSQATGPSANW) is disordered. The span at 270–281 (SWSSSRRSTSTT) shows a compositional bias: low complexity. Residues 282–291 (GKPSQATGPS) show a composition bias toward polar residues. Residues 444 to 464 (LSAILLAFIITWTPYNIMVLV) traverse the membrane as a helical segment. Residues 465–478 (STFCDKCVPVTLWH) lie on the Extracellular side of the membrane. Residues 479–498 (LGYWLCYVNSTVNPICYALC) form a helical membrane-spanning segment. Topologically, residues 499–532 (NRTFRKTFKMLLLCRWKKKKVEEKLYWQGNSKLP) are cytoplasmic. 2 positions are modified to phosphothreonine: threonine 501 and threonine 505.

This sequence belongs to the G-protein coupled receptor 1 family. Muscarinic acetylcholine receptor subfamily. CHRM5 sub-subfamily.

The protein localises to the cell membrane. The protein resides in the postsynaptic cell membrane. Its function is as follows. The muscarinic acetylcholine receptor mediates various cellular responses, including inhibition of adenylate cyclase, breakdown of phosphoinositides and modulation of potassium channels through the action of G proteins. Primary transducing effect is Pi turnover. The polypeptide is Muscarinic acetylcholine receptor M5 (CHRM5) (Homo sapiens (Human)).